The primary structure comprises 559 residues: Aspartokinase 3, chloroplastic (559 aa).

The N-terminal 85 residues, 1-85, are a transit peptide targeting the chloroplast; it reads MAASMQFYGV…LNKTEKKLTC (85 aa). Residues Lys88, Gly91, and Ser120 each contribute to the ATP site. Glu204 contacts substrate. 2 consecutive ACT domains span residues 402-480 and 481-559; these read ITST…SIIS and LIGN…AASS.

The protein belongs to the aspartokinase family. In terms of tissue distribution, highly expressed in xylem of leaves and hypocotyls, stele of roots and in trichomes after bolting. Weak expression in veins and mesophyll cells of caulone leaves, inflorescence stems, sepals, petals and stigmata.

The protein resides in the plastid. It is found in the chloroplast. The enzyme catalyses L-aspartate + ATP = 4-phospho-L-aspartate + ADP. The protein operates within amino-acid biosynthesis; L-lysine biosynthesis via DAP pathway; (S)-tetrahydrodipicolinate from L-aspartate: step 1/4. It participates in amino-acid biosynthesis; L-methionine biosynthesis via de novo pathway; L-homoserine from L-aspartate: step 1/3. Its pathway is amino-acid biosynthesis; L-threonine biosynthesis; L-threonine from L-aspartate: step 1/5. Allosterically inhibited by lysine, but not by S-adenosyl-L-methionine (SAM). K(0.5) for lysine in the presence of physiological concentrations of substrates is 7.4 uM. No inhibition by threonine or leucine and no activation or inhibition by alanine, cysteine, isoleucine, serine, valine, methionine, glutamine, asparagine, glutamic acid or arginine. Its function is as follows. Involved in the first step of essential amino acids lysine, threonine, methionine and isoleucine synthesis via the aspartate-family pathway. In Arabidopsis thaliana (Mouse-ear cress), this protein is Aspartokinase 3, chloroplastic (AK3).